A 397-amino-acid polypeptide reads, in one-letter code: MLHQKIAHKVRKVVVPGISLLIFFQGCLILLFLQLTYKTLYCRNDIRKQIGLNKTKRLFIVLVSSILHVVAPSAVRITTENSSVPKGTFFLDLKKKRILSHLKSNSVAICNHQIYTDWIFLWWLAYTSNLGANVFIILKKSLASIPILGFGMRNYNFIFMSRKWAQDKITLSNSLAGLDSNARGAGSLAGKSPERITEEGESIWNPEVIDPKQIHWPYNLILFPEGTNLSADTRQKSAKYAAKIGKKPFKNVLLPHSTGLRYSLQKLKPSIESLYDITIGYSGVKQEEYGELIYGLKSIFLEGKYPKLVDIHIRAFDVKDIPLEDENEFSEWLYKIWSEKDALMERYYSTGSFVSDPETNHSVTDSFKINRIELTEVLILPTLTIIWLVYKLYCFIF.

Positions 112–117 (HQIYTD) match the HXXXXD motif motif.

Belongs to the 1-acyl-sn-glycerol-3-phosphate acyltransferase family.

The protein resides in the lipid droplet. The enzyme catalyses 1-heptadecanoyl-sn-glycero-3-phosphate + octadecanoyl-CoA = 1-heptadecanoyl-2-octadecanoyl-sn-glycero-3-phosphate + CoA. It carries out the reaction 1-heptadecanoyl-sn-glycero-3-phosphate + tetradecanoyl-CoA = 1-heptadecanoyl-2-tetradecanoyl-sn-glycero-3-phosphate + CoA. The catalysed reaction is 1-heptadecanoyl-sn-glycero-3-phosphate + hexadecanoyl-CoA = 1-heptadecanoyl-2-hexadecanoyl-sn-glycero-3-phosphate + CoA. Acyltransferase with lysophosphatidic acid acyltransferase (LPAAT) activity. Fatty acyl substrates include 18:0-acyl-CoA, 16:0-acyl-CoA, 17:0-acyl-CoA and 14:0-acyl-CoA. Responsible for the acyl-CoA-dependent introduction of saturated very long chain fatty acids (VLCFAs) into phosphatidylinositol, transferring saturated FAs with 18 to 26 carbon atoms. Responsible for the incorporation of stearate into phosphatidylinositol. Overexpression has an effect on chromosome stability. Regulates phosphorylation and expression of glycerol-3-phosphate acyltransferase SCT1. In Saccharomyces cerevisiae (strain ATCC 204508 / S288c) (Baker's yeast), this protein is 2-acyl-1-lysophosphatidylinositol acyltransferase.